The sequence spans 149 residues: Transcriptional repressor NrdR (149 aa).

Residues 3–34 (CPFCSENDTKVIDSRLVADGHQVRRRRQCLAC) fold into a zinc finger. In terms of domain architecture, ATP-cone spans 49 to 139 (PKVIKSNGNR…VYRSFEDIRE (91 aa)).

It belongs to the NrdR family. The cofactor is Zn(2+).

Negatively regulates transcription of bacterial ribonucleotide reductase nrd genes and operons by binding to NrdR-boxes. The protein is Transcriptional repressor NrdR of Vibrio parahaemolyticus serotype O3:K6 (strain RIMD 2210633).